Here is a 414-residue protein sequence, read N- to C-terminus: Translation initiation factor 2 subunit gamma (414 aa).

Residues 8-206 form the tr-type G domain; sequence QPEVNIGVVG…AIEKFIPTPP (199 aa). The G1 stretch occupies residues 17-24; that stretch reads GHVDHGKT. Residues Asp-20, Thr-24, Gly-45, and Thr-47 each contribute to the Mg(2+) site. Residue 20–25 coordinates GTP; it reads DHGKTT. Positions 45-49 are G2; it reads GMTIK. Positions 60, 63, 75, and 77 each coordinate Zn(2+). The G3 stretch occupies residues 93–96; it reads DAPG. GTP is bound by residues 149–152 and 184–186; these read NKVD and SAL. The G4 stretch occupies residues 149-152; sequence NKVD. The G5 stretch occupies residues 184 to 186; that stretch reads SAL.

This sequence belongs to the TRAFAC class translation factor GTPase superfamily. Classic translation factor GTPase family. EIF2G subfamily. Heterotrimer composed of an alpha, a beta and a gamma chain. Mg(2+) serves as cofactor.

It carries out the reaction GTP + H2O = GDP + phosphate + H(+). Its function is as follows. eIF-2 functions in the early steps of protein synthesis by forming a ternary complex with GTP and initiator tRNA. The chain is Translation initiation factor 2 subunit gamma from Aeropyrum pernix (strain ATCC 700893 / DSM 11879 / JCM 9820 / NBRC 100138 / K1).